A 441-amino-acid chain; its full sequence is Putative transporter AmpG 1 (441 aa).

The next 12 membrane-spanning stretches (helical) occupy residues 5–25 (SHLL…MITG), 42–62 (IGIL…APIF), 78–98 (LSWI…FSFL), 104–124 (LVLF…QDTI), 143–163 (GIYI…AIYL), 171–191 (EIYK…IVAA), 249–269 (SGND…LVLY), 297–317 (VGKF…GFIM), 325–345 (SIFL…FLEI), 352–372 (LLFI…TAYI), 390–410 (FLSS…GYMV), and 413–433 (FGWQ…LLIL).

Belongs to the major facilitator superfamily.

The protein localises to the cell inner membrane. The chain is Putative transporter AmpG 1 (ampG1) from Rickettsia felis (strain ATCC VR-1525 / URRWXCal2) (Rickettsia azadi).